Consider the following 493-residue polypeptide: Glutamyl-tRNA(Gln) amidotransferase subunit A (493 aa).

Active-site charge relay system residues include lysine 79 and serine 159. Serine 183 serves as the catalytic Acyl-ester intermediate.

It belongs to the amidase family. GatA subfamily. As to quaternary structure, heterotrimer of A, B and C subunits.

The catalysed reaction is L-glutamyl-tRNA(Gln) + L-glutamine + ATP + H2O = L-glutaminyl-tRNA(Gln) + L-glutamate + ADP + phosphate + H(+). In terms of biological role, allows the formation of correctly charged Gln-tRNA(Gln) through the transamidation of misacylated Glu-tRNA(Gln) in organisms which lack glutaminyl-tRNA synthetase. The reaction takes place in the presence of glutamine and ATP through an activated gamma-phospho-Glu-tRNA(Gln). The chain is Glutamyl-tRNA(Gln) amidotransferase subunit A from Chelativorans sp. (strain BNC1).